The chain runs to 543 residues: Ipecac alkaloid beta-glucosidase 2 (543 aa).

A beta-D-glucoside-binding positions include Q36, H140, N185–E186, Y350, E422, W471, and F487. E186 (proton donor) is an active-site residue. E422 serves as the catalytic Nucleophile.

This sequence belongs to the glycosyl hydrolase 1 family.

Its subcellular location is the cytoplasm. The protein localises to the cytosol. The enzyme catalyses deacetylipecoside + H2O = deacetylipecoside aglycone + D-glucose. It carries out the reaction deacetylisoipecoside + H2O = deacetylisoipecoside aglycone + D-glucose. The protein operates within alkaloid biosynthesis. Beta-glucosidase catalyzing deglucosylation on N-deacetylisoipecoside and N-deacetylipecoside. This is Ipecac alkaloid beta-glucosidase 2 from Carapichea ipecacuanha (Ipecac).